The sequence spans 71 residues: MIPSSTRELLNIADSKYAVVVAVAKRARTLSEKYKEDENYRLSTMVTRALDEVVNGKVIIEPSKEDGSREV.

This sequence belongs to the RNA polymerase subunit omega family. In terms of assembly, the RNAP catalytic core consists of 2 alpha, 1 beta, 1 beta' and 1 omega subunit. When a sigma factor is associated with the core the holoenzyme is formed, which can initiate transcription.

It catalyses the reaction RNA(n) + a ribonucleoside 5'-triphosphate = RNA(n+1) + diphosphate. Its function is as follows. Promotes RNA polymerase assembly. Latches the N- and C-terminal regions of the beta' subunit thereby facilitating its interaction with the beta and alpha subunits. The chain is DNA-directed RNA polymerase subunit omega from Syntrophomonas wolfei subsp. wolfei (strain DSM 2245B / Goettingen).